Reading from the N-terminus, the 1020-residue chain is P3N-PIPO polyprotein (1020 aa).

Residues 165 to 308 (RMSEASLQLF…KKQSNEIIHY (144 aa)) form the Peptidase S30 domain. Residues His216, Asp225, and Ser259 each act as for P1 proteinase activity in the active site. The Involved in interaction with stylet and aphid transmission signature appears at 360-363 (KITC). An Involved in virions binding and aphid transmission motif is present at residues 618 to 620 (PTK). The Peptidase C6 domain maps to 644 to 766 (MFIAKAGYCY…DSNMKTYLVG (123 aa)). Residues Cys652 and His725 each act as for helper component proteinase activity in the active site.

This sequence belongs to the potyviridae P3N-PIPO polyprotein family. In terms of assembly, interacts (via PIPO domain) with host PCaP1 protein; this interaction may help to anchor the movement complex to the plasma membrane from which the complex could move to the plasmodesmata. Potyviral RNA is expressed as two polyproteins which undergo post-translational proteolytic processing. Genome polyprotein is processed by NIa-pro, P1 and HC-pro proteinases resulting in the production of at least ten individual proteins. P3N-PIPO is cleaved by P1 and HC-pro proteinases resulting in the production of three individual proteins. The P1 proteinase and the HC-pro cleave only their respective C-termini autocatalytically.

It is found in the host cell junction. Its subcellular location is the host plasmodesma. The catalysed reaction is Hydrolyzes a Gly-|-Gly bond at its own C-terminus, commonly in the sequence -Tyr-Xaa-Val-Gly-|-Gly, in the processing of the potyviral polyprotein.. Its function is as follows. Required for aphid transmission and also has proteolytic activity. Only cleaves a Gly-Gly dipeptide at its own C-terminus. Interacts with virions and aphid stylets. Acts as a suppressor of RNA-mediated gene silencing, also known as post-transcriptional gene silencing (PTGS), a mechanism of plant viral defense that limits the accumulation of viral RNAs. May have RNA-binding activity. In terms of biological role, allows efficient cell to cell propagation, by bypassing the host cell wall barrier. Transports viral genome to neighboring plant cells directly through plasmosdesmata, without any budding. This Plum pox potyvirus (isolate NAT) (PPV) protein is P3N-PIPO polyprotein.